Here is a 199-residue protein sequence, read N- to C-terminus: Interleukin-11 (199 aa).

The first 21 residues, 1-21 (MNCVCRLVLVVLSLWPDTAVA), serve as a signal peptide directing secretion. The tract at residues 182 to 190 (HLTLDWAVR) is important for interaction with IL11RA and for the stimulation of cell proliferation.

Belongs to the IL-6 superfamily. As to quaternary structure, interacts with IL11RA to associate with IL6ST, giving rise to a multimeric signaling complex.

It is found in the secreted. Cytokine that stimulates the proliferation of hematopoietic stem cells and megakaryocyte progenitor cells and induces megakaryocyte maturation resulting in increased platelet production. Also promotes the proliferation of hepatocytes in response to liver damage. Binding to its receptor formed by IL6ST and IL11RA activates a signaling cascade that promotes cell proliferation. Signaling leads to the activation of intracellular protein kinases and the phosphorylation of STAT3. The interaction with the membrane-bound IL11RA and IL6ST stimulates 'classic signaling', whereas the binding of IL11 and soluble IL11RA to IL6ST stimulates 'trans-signaling'. This Homo sapiens (Human) protein is Interleukin-11.